The sequence spans 670 residues: NAD-dependent histone deacetylase SIR2 (670 aa).

Disordered stretches follow at residues 1–157 (MTEY…EHPI) and 235–263 (DNDDSLPQKNSSETKNVSDTYTATYPSPS). Acidic residues predominate over residues 45–68 (NEDVDVDADADVDADADADADAEE). Residues 69–81 (DAQKDILEETKAD) are compositionally biased toward basic and acidic residues. Residues 82-92 (ELDEVVDEYEE) are compositionally biased toward acidic residues. Over residues 96–119 (SSNFNGTASDHVGITSSNTGSTAL) the composition is skewed to polar residues. A compositionally biased stretch (low complexity) spans 120 to 142 (AASSADTNSGSGNGTGTMATNGT). Positions 239–261 (SLPQKNSSETKNVSDTYTATYPS) are enriched in polar residues. Residues 293 to 583 (RLTNFHTIDD…ALVAQKCGWD (291 aa)) enclose the Deacetylase sirtuin-type domain. Residues 318–337 (GAGISTSLGIPDFRSSEGFY) and 400–403 (QNID) contribute to the NAD(+) site. Residue H420 is the Proton acceptor of the active site. Zn(2+) contacts are provided by C428, C431, C452, and C455. NAD(+)-binding positions include 527–529 (GTS), 552–554 (NKD), and C569. Residues 617–670 (AELEAEEEKHLPLQQSTAALTPPVSLSADSPGRSSSSSPQPPTQTDIANNQTST) are disordered. Low complexity predominate over residues 641-654 (SLSADSPGRSSSSS). The segment covering 659-670 (TQTDIANNQTST) has biased composition (polar residues).

This sequence belongs to the sirtuin family. Class I subfamily. Zn(2+) serves as cofactor.

The protein resides in the nucleus. The catalysed reaction is N(6)-acetyl-L-lysyl-[protein] + NAD(+) + H2O = 2''-O-acetyl-ADP-D-ribose + nicotinamide + L-lysyl-[protein]. In terms of biological role, NAD-dependent deacetylase, which asts as a key regulator of gene expression believed to help form modified chromatin structures on the genes it regulates. It is involved in telomeric silencing and in hm mating type loci silencing. In Kluyveromyces lactis (strain ATCC 8585 / CBS 2359 / DSM 70799 / NBRC 1267 / NRRL Y-1140 / WM37) (Yeast), this protein is NAD-dependent histone deacetylase SIR2 (SIR2).